The primary structure comprises 383 residues: Acetylornithine deacetylase (383 aa).

Residue His-80 participates in Zn(2+) binding. The active site involves Asp-82. Asp-112 serves as a coordination point for Zn(2+). Residue Glu-144 is part of the active site. 3 residues coordinate Zn(2+): Glu-145, Glu-169, and His-355.

It belongs to the peptidase M20A family. ArgE subfamily. In terms of assembly, homodimer. The cofactor is Zn(2+). Requires Co(2+) as cofactor. Glutathione is required as a cofactor.

Its subcellular location is the cytoplasm. It catalyses the reaction N(2)-acetyl-L-ornithine + H2O = L-ornithine + acetate. It participates in amino-acid biosynthesis; L-arginine biosynthesis; L-ornithine from N(2)-acetyl-L-ornithine (linear): step 1/1. Functionally, catalyzes the hydrolysis of the amide bond of N(2)-acetylated L-amino acids. Cleaves the acetyl group from N-acetyl-L-ornithine to form L-ornithine, an intermediate in L-arginine biosynthesis pathway, and a branchpoint in the synthesis of polyamines. This chain is Acetylornithine deacetylase, found in Escherichia coli O139:H28 (strain E24377A / ETEC).